The chain runs to 426 residues: Histidine--tRNA ligase (426 aa).

It belongs to the class-II aminoacyl-tRNA synthetase family. In terms of assembly, homodimer.

It localises to the cytoplasm. The catalysed reaction is tRNA(His) + L-histidine + ATP = L-histidyl-tRNA(His) + AMP + diphosphate + H(+). The chain is Histidine--tRNA ligase from Streptococcus pyogenes serotype M18 (strain MGAS8232).